The primary structure comprises 161 residues: N5-carboxyaminoimidazole ribonucleotide mutase (161 aa).

3 residues coordinate substrate: Ser9, Asp12, and Arg39.

Belongs to the AIR carboxylase family. Class I subfamily.

It carries out the reaction 5-carboxyamino-1-(5-phospho-D-ribosyl)imidazole + H(+) = 5-amino-1-(5-phospho-D-ribosyl)imidazole-4-carboxylate. It participates in purine metabolism; IMP biosynthesis via de novo pathway; 5-amino-1-(5-phospho-D-ribosyl)imidazole-4-carboxylate from 5-amino-1-(5-phospho-D-ribosyl)imidazole (N5-CAIR route): step 2/2. In terms of biological role, catalyzes the conversion of N5-carboxyaminoimidazole ribonucleotide (N5-CAIR) to 4-carboxy-5-aminoimidazole ribonucleotide (CAIR). The chain is N5-carboxyaminoimidazole ribonucleotide mutase from Vibrio parahaemolyticus serotype O3:K6 (strain RIMD 2210633).